Here is a 535-residue protein sequence, read N- to C-terminus: Sucrose transport protein SUT5 (535 aa).

Residues 1-53 (MEEGRRGDREAKSAAGWTALSTTKTTLEEKRRLQANGSVGGDAGTSGFRRIVR) are Cytoplasmic-facing. A helical membrane pass occupies residues 54-74 (LFFACMVAGGIQYGWALQLSL). At 75 to 87 (LSPYSQTLGISHS) the chain is on the extracellular side. Residues 88–108 (YVSLTWICGPIAGFVVQPIVG) form a helical membrane-spanning segment. At 109–122 (YYSDRCTMKMGRRR) the chain is on the cytoplasmic side. Residues 123–143 (PFILVGCLIICISVMIIGFSA) form a helical membrane-spanning segment. Over 144 to 163 (DIGRHLGDTKEHCSTYTGPR) the chain is Extracellular. The chain crosses the membrane as a helical span at residues 164–184 (WSAAMVYIVGFWFLDFANNTV). The Cytoplasmic portion of the chain corresponds to 185–203 (QGPARAMMADLSAGHHGPN). The chain crosses the membrane as a helical span at residues 204–224 (VGQSIFSLWMAIGSVLGYLSG). Topologically, residues 225–249 (ANGKWHEWFPWLKTAACCDACANLK) are extracellular. Residues 250–270 (GAFFTAVLLIVVSMTVTMYLA) form a helical membrane-spanning segment. The Cytoplasmic segment spans residues 271 to 302 (DEMPLDKQDVDTSGGGGCAVFVDLFKSLRNLP). The chain crosses the membrane as a helical span at residues 303–323 (PAMFKVLAVTAVTWLSWFPFI). Residues 324 to 354 (QYNTDWMGREIYHGEPQGTAAKADVYDAGVR) lie on the Extracellular side of the membrane. Residues 355–375 (EGAMGLLFCSVALGVTSFVIP) traverse the membrane as a helical segment. Over 376–384 (KLCRRLTSK) the chain is Cytoplasmic. The helical transmembrane segment at 385 to 405 (VVWSISNFLVFALMAVMVAVG) threads the bilayer. Over 406–429 (MVSMRGYRPSLAAGLTGPDPTLKA) the chain is Extracellular. The chain crosses the membrane as a helical span at residues 430–450 (VALVVFALIGIPQAVLFSVPW). Topologically, residues 451–465 (AVASEVTAEEGGGQG) are cytoplasmic. Residues 466 to 486 (LAIGVLNIAIVVPQLVIALTA) form a helical membrane-spanning segment. Topologically, residues 487–498 (GPIDGAFNKGNT) are extracellular. Residues 499–519 (PAFGIGGAFAFICGVLALIWL) form a helical membrane-spanning segment. The Cytoplasmic segment spans residues 520–535 (PKTRGVSNAAVVAGGH).

This sequence belongs to the glycoside-pentoside-hexuronide (GPH) cation symporter transporter (TC 2.A.2.4) family. In terms of assembly, homodimer.

It localises to the cell membrane. Its pathway is glycan biosynthesis; sucrose metabolism. In terms of biological role, responsible for the transport of sucrose into the cell, with the concomitant uptake of protons (symport system). May also transport other glucosides. The protein is Sucrose transport protein SUT5 (SUT5) of Oryza sativa subsp. indica (Rice).